The sequence spans 165 residues: MKNIAVIPGSFDPITLGHLDIIKRSAGLFDVVHVSVLNNASKQGFFTIEERIEMISEAVKDIPNVEVEYFQGLLVDYCNKVGAKQIVRGLRAVSDFEYEMQLTSMNKKLDDDLETLYMMTNNQYSFISSSMTKDVAKYGGDVSSIVPPNVELALKQKYAEINRRP.

Serine 10 contacts substrate. ATP-binding positions include 10-11 (SF) and histidine 18. Residues lysine 42, leucine 74, and arginine 88 each contribute to the substrate site. ATP is bound by residues 89–91 (GLR), glutamate 99, and 124–130 (YSFISSS).

This sequence belongs to the bacterial CoaD family. Homohexamer. Requires Mg(2+) as cofactor.

It is found in the cytoplasm. The enzyme catalyses (R)-4'-phosphopantetheine + ATP + H(+) = 3'-dephospho-CoA + diphosphate. It functions in the pathway cofactor biosynthesis; coenzyme A biosynthesis; CoA from (R)-pantothenate: step 4/5. Functionally, reversibly transfers an adenylyl group from ATP to 4'-phosphopantetheine, yielding dephospho-CoA (dPCoA) and pyrophosphate. The sequence is that of Phosphopantetheine adenylyltransferase from Macrococcus caseolyticus (strain JCSC5402) (Macrococcoides caseolyticum).